The primary structure comprises 74 residues: Peptide BmKb1 (74 aa).

An N-terminal signal peptide occupies residues 1 to 22 (MEIKYLLTVFLVLLIVSDHCQA). Lys40 carries the post-translational modification Lysine amide. A propeptide spanning residues 46–74 (DLNGYIDHFKNFRKRDAELEELLSKLPIY) is cleaved from the precursor.

This sequence belongs to the non-disulfide-bridged peptide (NDBP) superfamily. Short antimicrobial peptide (group 4) family. As to expression, expressed by the venom gland.

Its subcellular location is the secreted. It localises to the target cell membrane. Functionally, has antibacterial activity against Gram-positive bacteria S.aureus, M.luteus, B.subtilis, and Gram-negative bacteria E.coli, and P.aeruginosa. The chain is Peptide BmKb1 from Olivierus martensii (Manchurian scorpion).